A 181-amino-acid polypeptide reads, in one-letter code: MDSQVTSSAKTPNPVVFFDITLGGESLGRIKMELFTSITPRTAENFRQFCTGESKSPQGRPQGYKNSKFHRVIKDFMIQGGDFVNGDGTGSRTIYGTPRFQDENFILKHDQPGLLSMANSGPNTNGCQFFITTTATPFLNNKHVVFGQVVEGMDVVRMIENTRTTRDKPNQDVTIIQCGEM.

The PPIase cyclophilin-type domain occupies 17–180 (FFDITLGGES…QDVTIIQCGE (164 aa)).

The protein belongs to the cyclophilin-type PPIase family. PPIase H subfamily.

It is found in the nucleus. It carries out the reaction [protein]-peptidylproline (omega=180) = [protein]-peptidylproline (omega=0). Its function is as follows. PPIases accelerate the folding of proteins. It catalyzes the cis-trans isomerization of proline imidic peptide bonds in oligopeptides. This Aspergillus oryzae (strain ATCC 42149 / RIB 40) (Yellow koji mold) protein is Peptidyl-prolyl cis-trans isomerase H (cyp3).